The chain runs to 267 residues: Methylglyoxal reductase DkgB (267 aa).

The Proton donor role is filled by Tyr-39. His-97 contacts substrate. 179-231 (MTLAYGKALKDEVIARIAAKHNATPAQVILAWAMGEGYSVIPSSTRRENLASS) provides a ligand contact to NADP(+).

This sequence belongs to the aldo/keto reductase family. In terms of assembly, monomer.

The protein localises to the cytoplasm. The enzyme catalyses hydroxyacetone + NADP(+) = methylglyoxal + NADPH + H(+). In terms of biological role, aldo-keto reductase that significantly contributes to cellular methylglyoxal detoxification by catalyzing the NADPH-dependent conversion of methylglyoxal to acetol. The chain is Methylglyoxal reductase DkgB from Salmonella typhimurium (strain LT2 / SGSC1412 / ATCC 700720).